The following is an 878-amino-acid chain: Leucine--tRNA ligase (878 aa).

The 'HIGH' region motif lies at 43 to 54; sequence PYPSAQGLHVGH. Positions 634-638 match the 'KMSKS' region motif; that stretch reads KMSKA. Lysine 637 provides a ligand contact to ATP.

It belongs to the class-I aminoacyl-tRNA synthetase family.

The protein resides in the cytoplasm. It carries out the reaction tRNA(Leu) + L-leucine + ATP = L-leucyl-tRNA(Leu) + AMP + diphosphate. This Treponema pallidum subsp. pallidum (strain SS14) protein is Leucine--tRNA ligase.